The primary structure comprises 1863 residues: Breast cancer type 1 susceptibility protein homolog (1863 aa).

At Met1 the chain carries N-acetylmethionine. Residues 24-65 form an RING-type zinc finger; sequence CPICLELIKEPVSTKCDHIFCKFCMLKLLNQKKGPSQCPLCK. A Glycyl lysine isopeptide (Lys-Gly) (interchain with G-Cter in SUMO2) cross-link involves residue Lys109. Position 114 is a phosphoserine (Ser114). Residues 230–267 form a disordered region; the sequence is ETDVTNTEHHQPSNNDLNTTEKRATERHPEKYQGSSVS. A compositionally biased stretch (basic and acidic residues) spans 248–260; it reads TTEKRATERHPEK. Residue Lys301 forms a Glycyl lysine isopeptide (Lys-Gly) (interchain with G-Cter in SUMO2) linkage. A disordered region spans residues 306–338; that stretch reads NKSKQPGLARSQHNRWAGSKETCNDRRTPSTEK. Basic and acidic residues predominate over residues 327-338; the sequence is TCNDRRTPSTEK. Lys339 participates in a covalent cross-link: Glycyl lysine isopeptide (Lys-Gly) (interchain with G-Cter in SUMO2). Phosphoserine occurs at positions 395, 398, 423, and 434. Residues Lys443, Lys459, and Lys519 each participate in a glycyl lysine isopeptide (Lys-Gly) (interchain with G-Cter in SUMO2) cross-link. The residue at position 551 (Ser551) is a Phosphoserine. Glycyl lysine isopeptide (Lys-Gly) (interchain with G-Cter in SUMO2) cross-links involve residues Lys583 and Lys654. Residues 650–739 are disordered; the sequence is IKKKKYNQMP…EKEEKLETVK (90 aa). Phosphoserine occurs at positions 694, 708, and 725. The span at 705–716 shows a compositional bias: polar residues; it reads APGSFTNCSNTS. Residues 727–737 show a composition bias toward basic and acidic residues; sequence PREEKEEKLET. Glycyl lysine isopeptide (Lys-Gly) (interchain with G-Cter in SUMO2) cross-links involve residues Lys734 and Lys739. Ser753 and Ser840 each carry phosphoserine. The segment at 896–915 is disordered; the sequence is SPKVTFEREQKEQNQGKNES. Residues 900-909 are compositionally biased toward basic and acidic residues; sequence TFEREQKEQN. Residues Lys918 and Lys987 each participate in a glycyl lysine isopeptide (Lys-Gly) (interchain with G-Cter in SUMO2) cross-link. Position 988 is a phosphoserine; by CHEK2 (Ser988). Ser1009 is modified (phosphoserine). Lys1079 is covalently cross-linked (Glycyl lysine isopeptide (Lys-Gly) (interchain with G-Cter in SUMO2)). Ser1143, Ser1189, Ser1191, Ser1211, Ser1217, Ser1218, Ser1280, Ser1328, Ser1336, Ser1342, and Ser1387 each carry phosphoserine. Positions 1181–1216 are disordered; it reads VQRGELSRSPSPFTHTHLAQGYRRGAKKLESSEENL. Residues 1322–1395 form a disordered region; sequence KQMRHQSESQ…SSQSDILTTQ (74 aa). Positions 1373 to 1395 are enriched in polar residues; it reads ESETSVSEDCSGLSSQSDILTTQ. Phosphothreonine is present on Thr1394. Positions 1397–1424 are interaction with PALB2; the sequence is RDTMQDNLIKLQQEMAELEAVLEQHGSQ. Residues Ser1423, Ser1457, Ser1524, and Ser1542 each carry the phosphoserine modification. A disordered region spans residues 1440–1505; it reads EDLQNPEQST…SSPSKCPSLD (66 aa). Over residues 1444 to 1470 the composition is skewed to polar residues; sequence NPEQSTSEKAVLTSQKSSEYPISQNPE. Residues 1565 to 1642 are disordered; that stretch reads ESGISLFSDD…SREKPELTAS (78 aa). Residues 1610 to 1624 are compositionally biased toward polar residues; it reads SAQSPAAAHTTNTAG. BRCT domains are found at residues 1642-1736 and 1756-1855; these read STER…DFEV and QDRK…TYLI.

As to quaternary structure, heterodimer with BARD1. Part of the BRCA1-associated genome surveillance complex (BASC), which contains BRCA1, MSH2, MSH6, MLH1, ATM, BLM, PMS2 and the MRE11-RAD50-NBN protein (MRN) complex. This association could be a dynamic process changing throughout the cell cycle and within subnuclear domains. Component of the BRCA1-A complex, at least composed of BRCA1, BARD1, UIMC1/RAP80, ABRAXAS1, BRCC3/BRCC36, BABAM2 and BABAM1/NBA1. Interacts (via the BRCT domains) with ABRAXAS1 (phosphorylated form); this is important for recruitment to sites of DNA damage. Can form a heterotetramer with two molecules of ABRAXAS1 (phosphorylated form). Component of the BRCA1-RBBP8 complex. Interacts (via the BRCT domains) with RBBP8 ('Ser-327' phosphorylated form); the interaction ubiquitinates RBBP8, regulates CHEK1 activation, and involves RBBP8 in BRCA1-dependent G2/M checkpoint control on DNA damage. Associates with RNA polymerase II holoenzyme. Interacts with SMC1A, NELFB, DCLRE1C, CLSPN. CHEK1, CHEK2, BAP1, BRCC3, UBXN1 and PCLAF. Interacts (via BRCT domains) with BRIP1 (phosphorylated form). Interacts with FANCD2 (ubiquitinated form). Interacts with H2AX (phosphorylated on 'Ser-140'). Interacts (via the BRCT domains) with ACACA (phosphorylated form); the interaction prevents dephosphorylation of ACACA. Part of a BRCA complex containing BRCA1, BRCA2 and PALB2. Interacts directly with PALB2; the interaction is essential for its function in HRR. Interacts directly with BRCA2; the interaction occurs only in the presence of PALB2 which serves as the bridging protein. Interacts (via the BRCT domains) with LMO4; the interaction represses the transcriptional activity of BRCA1. Interacts (via the BRCT domains) with CCAR2 (via N-terminus); the interaction represses the transcriptional activator activity of BRCA1. Interacts with EXD2. Interacts (via C-terminus) with DHX9; this interaction is direct and links BRCA1 to the RNA polymerase II holoenzyme. Interacts with DNA helicase ZGRF1; the interaction is increased following DNA damage induction. In terms of processing, phosphorylated in response to IR, UV, and various stimuli that cause checkpoint activation, probably by ATM or ATR. Phosphorylation at Ser-988 by CHEK2 regulates mitotic spindle assembly. Phosphorylation by AURKA regulates centrosomal microtubule nucleation. Autoubiquitinated, undergoes 'Lys-6'-linked polyubiquitination. 'Lys-6'-linked polyubiquitination does not promote degradation.

Its subcellular location is the nucleus. It is found in the chromosome. It localises to the cytoplasm. It carries out the reaction S-ubiquitinyl-[E2 ubiquitin-conjugating enzyme]-L-cysteine + [acceptor protein]-L-lysine = [E2 ubiquitin-conjugating enzyme]-L-cysteine + N(6)-ubiquitinyl-[acceptor protein]-L-lysine.. Its function is as follows. E3 ubiquitin-protein ligase that specifically mediates the formation of 'Lys-6'-linked polyubiquitin chains and plays a central role in DNA repair by facilitating cellular responses to DNA damage. It is unclear whether it also mediates the formation of other types of polyubiquitin chains. The BRCA1-BARD1 heterodimer coordinates a diverse range of cellular pathways such as DNA damage repair, ubiquitination and transcriptional regulation to maintain genomic stability. Regulates centrosomal microtubule nucleation. Required for appropriate cell cycle arrests after ionizing irradiation in both the S-phase and the G2 phase of the cell cycle. Required for FANCD2 targeting to sites of DNA damage. Inhibits lipid synthesis by binding to inactive phosphorylated ACACA and preventing its dephosphorylation. Contributes to homologous recombination repair (HRR) via its direct interaction with PALB2, fine-tunes recombinational repair partly through its modulatory role in the PALB2-dependent loading of BRCA2-RAD51 repair machinery at DNA breaks. Component of the BRCA1-RBBP8 complex which regulates CHEK1 activation and controls cell cycle G2/M checkpoints on DNA damage via BRCA1-mediated ubiquitination of RBBP8. Acts as a transcriptional activator. This is Breast cancer type 1 susceptibility protein homolog (BRCA1) from Pan troglodytes (Chimpanzee).